The chain runs to 89 residues: Elongation factor 1-beta (89 aa).

It belongs to the EF-1-beta/EF-1-delta family.

In terms of biological role, promotes the exchange of GDP for GTP in EF-1-alpha/GDP, thus allowing the regeneration of EF-1-alpha/GTP that could then be used to form the ternary complex EF-1-alpha/GTP/AAtRNA. The chain is Elongation factor 1-beta from Methanococcus maripaludis (strain C5 / ATCC BAA-1333).